Consider the following 425-residue polypeptide: Serine--tRNA ligase (425 aa).

Position 229–231 (229–231) interacts with L-serine; that stretch reads TSE. ATP-binding positions include 259–261 and Val-275; that span reads RKE. Residue Glu-282 coordinates L-serine. 349-352 contacts ATP; it reads EVTS. Thr-384 provides a ligand contact to L-serine.

Belongs to the class-II aminoacyl-tRNA synthetase family. Type-1 seryl-tRNA synthetase subfamily. Homodimer. The tRNA molecule binds across the dimer.

The protein localises to the cytoplasm. The enzyme catalyses tRNA(Ser) + L-serine + ATP = L-seryl-tRNA(Ser) + AMP + diphosphate + H(+). The catalysed reaction is tRNA(Sec) + L-serine + ATP = L-seryl-tRNA(Sec) + AMP + diphosphate + H(+). Its pathway is aminoacyl-tRNA biosynthesis; selenocysteinyl-tRNA(Sec) biosynthesis; L-seryl-tRNA(Sec) from L-serine and tRNA(Sec): step 1/1. Functionally, catalyzes the attachment of serine to tRNA(Ser). Is also able to aminoacylate tRNA(Sec) with serine, to form the misacylated tRNA L-seryl-tRNA(Sec), which will be further converted into selenocysteinyl-tRNA(Sec). The chain is Serine--tRNA ligase from Borreliella burgdorferi (strain ATCC 35210 / DSM 4680 / CIP 102532 / B31) (Borrelia burgdorferi).